A 502-amino-acid chain; its full sequence is UPF0371 protein CLD_0424 (502 aa).

This sequence belongs to the UPF0371 family.

This chain is UPF0371 protein CLD_0424, found in Clostridium botulinum (strain Okra / Type B1).